Reading from the N-terminus, the 71-residue chain is Small ribosomal subunit protein bS21 (71 aa).

A compositionally biased stretch (basic residues) spans 49–59 (KAAAVKRAAKK). The interval 49–71 (KAAAVKRAAKKVSRENARRVRMY) is disordered. Positions 60-71 (VSRENARRVRMY) are enriched in basic and acidic residues.

It belongs to the bacterial ribosomal protein bS21 family.

The protein is Small ribosomal subunit protein bS21 of Colwellia psychrerythraea (strain 34H / ATCC BAA-681) (Vibrio psychroerythus).